Here is a 159-residue protein sequence, read N- to C-terminus: Carbohydrate sulfotransferase 15 (159 aa).

Residues 1–159 (SGTTDFYRRI…YQPHNERLVK (159 aa)) are Lumenal-facing. Asparagine 42 and asparagine 112 each carry an N-linked (GlcNAc...) asparagine glycan.

This sequence belongs to the sulfotransferase 1 family. It depends on a divalent metal cation as a cofactor. Glutathione is required as a cofactor.

The protein localises to the golgi apparatus membrane. The catalysed reaction is dermatan 4'-sulfate + n 3'-phosphoadenylyl sulfate = dermatan 4',6'-bissulfate + n adenosine 3',5'-bisphosphate + n H(+). It catalyses the reaction chondroitin 4'-sulfate + n 3'-phosphoadenylyl sulfate = chondroitin 4',6'-bissulfate + n adenosine 3',5'-bisphosphate + n H(+). Sulfotransferase that transfers sulfate from 3'-phosphoadenosine 5'-phosphosulfate (PAPS) to the C-6 hydroxyl group of the GalNAc 4-sulfate residue of chondroitin sulfate A and forms chondroitin sulfate E containing GlcA-GalNAc(4,6-SO(4)) repeating units. In Nototodarus sloanii (Wellington flying squid), this protein is Carbohydrate sulfotransferase 15 (GALNAC4S6ST).